The following is a 278-amino-acid chain: HCLS1-associated protein X-1 (278 aa).

At Ser2 the chain carries N-acetylserine. Residues 2–43 (SVFDLFRGFFGFPGPRSHRDPFFGGMTRDDDDDEDDEEEEDS) form a required for localization in mitochondria region. Disordered regions lie at residues 15–50 (GPRS…GRES) and 99–262 (LPSH…ALDD). The span at 30–43 (DDDDDEDDEEEEDS) shows a compositional bias: acidic residues. The interval 113 to 278 (TPGVRLREGQ…LLLGRWFRSR (166 aa)) is involved in HCLS1 binding. A compositionally biased stretch (basic and acidic residues) spans 132 to 152 (PDSHQPRIFEGVLESHAKPES). Positions 174–205 (VSPHSRAREDKDLDSQVSQEGLGPLLQPQPKS) are involved in CASP9 binding. Residues 175 to 246 (SPHSRAREDK…TTVTHQEAHD (72 aa)) form an involved in GNA13 binding region. A required for localization in sarcoplasmic reticulum region spans residues 182–278 (EDKDLDSQVS…LLLGRWFRSR (97 aa)). Residues 183–278 (DKDLDSQVSQ…LLLGRWFRSR (96 aa)) form an involved in PKD2 binding region. A phosphoserine mark is found at Ser188 and Ser191. An involved in PLN binding region spans residues 202–224 (QPKSYFKSISVTKITKPDGTVEE). The tract at residues 202 to 244 (QPKSYFKSISVTKITKPDGTVEEHRTVVDSEGRRETTVTHQEA) is involved in ATP2A2 binding. Positions 209–278 (SISVTKITKP…LLLGRWFRSR (70 aa)) are mediates interaction with UCP3. Residues 216 to 254 (TKPDGTVEEHRTVVDSEGRRETTVTHQEAHDSSRSDPDP) show a composition bias toward basic and acidic residues. The segment at 269 to 278 (LLLGRWFRSR) is required for ITGB6 binding.

It belongs to the HAX1 family. As to quaternary structure, interacts with ABCB1, ABCB4 and ABCB11. Directly associates with HCLS1/HS1, through binding to its N-terminal region. Interacts with CTTN. Interacts with PKD2. Interacts with GNA13. Interacts with CASP9. Interacts with ITGB6. Interacts with PLN and ATP2A2; these interactions are inhibited by calcium. Interacts with GRB7. Interacts (via C-terminus) with XIAP/BIRC4 (via BIR 2 domain and BIR 3 domain) and this interaction blocks ubiquitination of XIAP/BIRC4. Interacts with TPC2. Interacts with KCNC3. Interacts with XPO1. Interacts with RNF217. Interacts with UCP3; the interaction is direct and calcium-dependent. Interacts with MAPRE2; this interaction regulates cell migration in keratinocytes. As to expression, present in striated muscles (at protein level).

Its subcellular location is the mitochondrion matrix. It is found in the endoplasmic reticulum. The protein resides in the nucleus membrane. The protein localises to the cytoplasmic vesicle. It localises to the cytoplasm. Its subcellular location is the cell cortex. It is found in the cell membrane. The protein resides in the sarcoplasmic reticulum. The protein localises to the P-body. It localises to the nucleus. Functionally, recruits the Arp2/3 complex to the cell cortex and regulates reorganization of the cortical actin cytoskeleton via its interaction with KCNC3 and the Arp2/3 complex. Slows down the rate of inactivation of KCNC3 channels. Promotes GNA13-mediated cell migration. Involved in the clathrin-mediated endocytosis pathway. May be involved in internalization of ABC transporters such as ABCB11. May inhibit CASP9 and CASP3. Promotes cell survival. May regulate intracellular calcium pools. In Rattus norvegicus (Rat), this protein is HCLS1-associated protein X-1 (Hax1).